Consider the following 410-residue polypeptide: Dephospho-CoA kinase (410 aa).

One can recognise a DPCK domain in the interval 3–201; sequence CIGITGGIGA…HRILPFAYNL (199 aa). Residue 11–16 coordinates ATP; it reads GAGKSL. Residues 196–410 form a UPF0157 region; it reads PFAYNLSQRQ…EWADSTGWRL (215 aa).

It in the N-terminal section; belongs to the CoaE family. This sequence in the C-terminal section; belongs to the UPF0157 (GrpB) family.

It is found in the cytoplasm. It carries out the reaction 3'-dephospho-CoA + ATP = ADP + CoA + H(+). The protein operates within cofactor biosynthesis; coenzyme A biosynthesis; CoA from (R)-pantothenate: step 5/5. Its function is as follows. Catalyzes the phosphorylation of the 3'-hydroxyl group of dephosphocoenzyme A to form coenzyme A. This Mycobacterium leprae (strain TN) protein is Dephospho-CoA kinase.